We begin with the raw amino-acid sequence, 376 residues long: Succinyl-diaminopimelate desuccinylase (376 aa).

His67 contacts Zn(2+). Asp69 is a catalytic residue. Asp100 provides a ligand contact to Zn(2+). Glu134 serves as the catalytic Proton acceptor. Residues Glu135, Glu163, and His349 each contribute to the Zn(2+) site.

This sequence belongs to the peptidase M20A family. DapE subfamily. As to quaternary structure, homodimer. Zn(2+) is required as a cofactor. Co(2+) serves as cofactor.

The catalysed reaction is N-succinyl-(2S,6S)-2,6-diaminopimelate + H2O = (2S,6S)-2,6-diaminopimelate + succinate. It functions in the pathway amino-acid biosynthesis; L-lysine biosynthesis via DAP pathway; LL-2,6-diaminopimelate from (S)-tetrahydrodipicolinate (succinylase route): step 3/3. Functionally, catalyzes the hydrolysis of N-succinyl-L,L-diaminopimelic acid (SDAP), forming succinate and LL-2,6-diaminopimelate (DAP), an intermediate involved in the bacterial biosynthesis of lysine and meso-diaminopimelic acid, an essential component of bacterial cell walls. In Nitrosomonas europaea (strain ATCC 19718 / CIP 103999 / KCTC 2705 / NBRC 14298), this protein is Succinyl-diaminopimelate desuccinylase.